A 714-amino-acid polypeptide reads, in one-letter code: Centromere/kinetochore protein zw10 (714 aa).

Belongs to the ZW10 family.

Its subcellular location is the cytoplasm. The protein localises to the nucleus. It is found in the chromosome. The protein resides in the centromere. It localises to the kinetochore. Its function is as follows. Required for accurate chromosome segregation. The sequence is that of Centromere/kinetochore protein zw10 (mit(1)15) from Drosophila grimshawi (Hawaiian fruit fly).